We begin with the raw amino-acid sequence, 394 residues long: Elongation factor Tu (394 aa).

A tr-type G domain is found at lysine 10 to glutamate 204. Residues glycine 19–threonine 26 are G1. Position 19-26 (glycine 19–threonine 26) interacts with GTP. Threonine 26 contributes to the Mg(2+) binding site. The interval glycine 60–asparagine 64 is G2. A G3 region spans residues aspartate 81–glycine 84. GTP is bound by residues aspartate 81–histidine 85 and asparagine 136–aspartate 139. Residues asparagine 136–aspartate 139 are G4. The interval serine 174–leucine 176 is G5.

The protein belongs to the TRAFAC class translation factor GTPase superfamily. Classic translation factor GTPase family. EF-Tu/EF-1A subfamily. Monomer.

It is found in the cytoplasm. It carries out the reaction GTP + H2O = GDP + phosphate + H(+). GTP hydrolase that promotes the GTP-dependent binding of aminoacyl-tRNA to the A-site of ribosomes during protein biosynthesis. In Shewanella sp. (strain ANA-3), this protein is Elongation factor Tu.